The sequence spans 675 residues: MTSTKDKIEKLRKILLKYEYFYHTLNQSIISDAEYDYLFRQLYELELKNKELIPSDSPTQKVGSHILQKFKKIKHFSPMLSLENTFDVNGYLNFKKRIKKSIHNNEPLSFCCELKLDGVAISIIYEEGIFVRAATRGDGFEGENITSNARMIDSIPLKLKGIDIPKRLEIRGEVFMLKSNFIKLNKKYKLNQNKYFSNPRNAAAGSLRHIDPNITAERKLIFSCHGCDFFVKTNKELTTHYQRLMKCLSWGIPVNKEIVICSSDIEIIQFYKKIAQKRNFLDFDIDGIVIKVNSLELQKKIGSTTKSPRWAIAFKFSPKERITTLNDVKFQVGRTGVITPVAYFNPVYISGVMISKASLHNKNEIERLNLHFNDTITICRSGDVIPRLLNVIEIRRCDNAKKIIFPSFCPVCNTELLENIEEKLIRCHSGLTCDAQKKQALYHFFSKKSLYVVGLGPKIINELVEKGLVKNPIDFFYLKDIDLIQLKNVGKRKSIKIINSIKKCKKTTLKCFIYALGIPGVGEVVAGKIANYFIKLDKLMNSNILELNCISGVGKIISNNIFNYFSTISNREMVVKLIKQAGIFLNDQEIHKINSEKTYFFNKKIVLTGVFKSFSRIELKTILLSLGAKISNNISRKTDFLIYGNNFGSKFFRAKDLDVKIINQEELNSLIRIKE.

NAD(+) contacts are provided by residues 32–36 (DAEYD), 81–82 (SL), and Glu113. Lys115 serves as the catalytic N6-AMP-lysine intermediate. Arg136, Glu173, Lys291, and Lys315 together coordinate NAD(+). Zn(2+) is bound by residues Cys409, Cys412, Cys427, and Cys433. One can recognise a BRCT domain in the interval 595 to 675 (SEKTYFFNKK…ELNSLIRIKE (81 aa)).

This sequence belongs to the NAD-dependent DNA ligase family. LigA subfamily. Mg(2+) serves as cofactor. Requires Mn(2+) as cofactor.

It catalyses the reaction NAD(+) + (deoxyribonucleotide)n-3'-hydroxyl + 5'-phospho-(deoxyribonucleotide)m = (deoxyribonucleotide)n+m + AMP + beta-nicotinamide D-nucleotide.. Functionally, DNA ligase that catalyzes the formation of phosphodiester linkages between 5'-phosphoryl and 3'-hydroxyl groups in double-stranded DNA using NAD as a coenzyme and as the energy source for the reaction. It is essential for DNA replication and repair of damaged DNA. The polypeptide is DNA ligase (Buchnera aphidicola subsp. Acyrthosiphon pisum (strain APS) (Acyrthosiphon pisum symbiotic bacterium)).